A 446-amino-acid polypeptide reads, in one-letter code: Transcription factor SOX-3 (446 aa).

2 disordered regions span residues proline 29 to glutamine 48 and proline 87 to lysine 140. Composition is skewed to gly residues over residues glycine 96–glycine 107 and alanine 117–threonine 134. Positions valine 139–lysine 207 form a DNA-binding region, HMG box. The 9aaTAD motif lies at aspartate 399–proline 407.

In terms of assembly, interacts with SOX2 and FGFR1.

The protein localises to the nucleus. In terms of biological role, transcription factor required during the formation of the hypothalamo-pituitary axis. May function as a switch in neuronal development. Keeps neural cells undifferentiated by counteracting the activity of proneural proteins and suppresses neuronal differentiation. Required also within the pharyngeal epithelia for craniofacial morphogenesis. Controls a genetic switch in male development. Is necessary for initiating male sex determination by directing the development of supporting cell precursors (pre-Sertoli cells) as Sertoli rather than granulosa cells. The sequence is that of Transcription factor SOX-3 (SOX3) from Homo sapiens (Human).